Consider the following 80-residue polypeptide: U-Asilidin(1)-Dg12 (80 aa).

An N-terminal signal peptide occupies residues 1–24; it reads MARLLVVSVGVFLAVIMLSSETMS. A propeptide spanning residues 25–46 is cleaved from the precursor; it reads LPAGENLPALTLFEAQNQLIGL. Disulfide bonds link cysteine 53–cysteine 67, cysteine 60–cysteine 71, and cysteine 66–cysteine 78.

Belongs to the asilidin-1 family. Expressed by the venom gland.

It localises to the secreted. Its function is as follows. Neurotoxin that may modulate ions channels (other than those tested). In vivo, induces neurotoxic effects when injected into insects (tested on L.cuprina and A.domesticus). The chain is U-Asilidin(1)-Dg12 from Dolopus genitalis (Giant Australian assassin fly).